The chain runs to 260 residues: Hydroxyethylthiazole kinase 1 (260 aa).

Methionine 39 contacts substrate. Positions 115 and 160 each coordinate ATP. Glycine 187 lines the substrate pocket.

Belongs to the Thz kinase family. It depends on Mg(2+) as a cofactor.

The catalysed reaction is 5-(2-hydroxyethyl)-4-methylthiazole + ATP = 4-methyl-5-(2-phosphooxyethyl)-thiazole + ADP + H(+). It participates in cofactor biosynthesis; thiamine diphosphate biosynthesis; 4-methyl-5-(2-phosphoethyl)-thiazole from 5-(2-hydroxyethyl)-4-methylthiazole: step 1/1. Functionally, catalyzes the phosphorylation of the hydroxyl group of 4-methyl-5-beta-hydroxyethylthiazole (THZ). This chain is Hydroxyethylthiazole kinase 1, found in Streptococcus pneumoniae (strain P1031).